Reading from the N-terminus, the 673-residue chain is MTDRFQLVSPYSPAGDQPAAIDKLVANFEAGLAKQTLLGVTGSGKTYTIANVVQQVQKPTLVMAPNKTLAAQLYGEFKSFFPHNAVEYFVSYYDYYQPEAYVPSSDTFIEKDSSINEHIEQMRLSATKTLLSRRDSLVVATVSAIYGLGAPEDYLSLRLILSIGEHIDQRQLIRHLTDLQYTRNEFELTRGAFRVRGEVLDVFPAESDTEALRIELFDGDIEQLTLFDPLTGETLRKLQRYTVYPKTHYATTRERTLSAVDTIKEELKERLEQLYSQNKLVEAQRLAQRTQFDLEMMAEVGFCNGIENYSRHLTGKAPGEPPPTLFDYLPPDALLVIDESHVTIPQIGAMYKGDRSRKETLVEFGFRLPSALDNRPLRFEEWEARSPRSIYVSATPGPYELRESAGEVTELVVRPTGLIDPVVEIRPVGTQVDDLMSEIHERIKLGDRVLVTTLTKRMAENLTEYLGEHGIRVRYLHSDIDTVERVEIIRDLRLGKFDVLVGINLLREGLDMPEVSLVAILDADKEGFLRSTGSLIQTIGRAARNLRGKAILYADKMTRSMQAAIDESDRRREKQVEYNLEHGITPESVERPISDIMEGAREDAAEKKSGKGRSKSRQVAEETPDYRAMKPAEIAGKLKSLEQKMYQHAKDLEFEAAAQIRDQIQKLKTASLA.

The 158-residue stretch at 26–183 (ANFEAGLAKQ…RHLTDLQYTR (158 aa)) folds into the Helicase ATP-binding domain. Residue 39-46 (GVTGSGKT) participates in ATP binding. A Beta-hairpin motif is present at residues 92–115 (YYDYYQPEAYVPSSDTFIEKDSSI). Residues 431 to 597 (QVDDLMSEIH…SVERPISDIM (167 aa)) enclose the Helicase C-terminal domain. The interval 601–631 (REDAAEKKSGKGRSKSRQVAEETPDYRAMKP) is disordered. Residues 618–630 (QVAEETPDYRAMK) show a composition bias toward basic and acidic residues. Residues 635 to 670 (AGKLKSLEQKMYQHAKDLEFEAAAQIRDQIQKLKTA) enclose the UVR domain.

This sequence belongs to the UvrB family. In terms of assembly, forms a heterotetramer with UvrA during the search for lesions. Interacts with UvrC in an incision complex.

It is found in the cytoplasm. The UvrABC repair system catalyzes the recognition and processing of DNA lesions. A damage recognition complex composed of 2 UvrA and 2 UvrB subunits scans DNA for abnormalities. Upon binding of the UvrA(2)B(2) complex to a putative damaged site, the DNA wraps around one UvrB monomer. DNA wrap is dependent on ATP binding by UvrB and probably causes local melting of the DNA helix, facilitating insertion of UvrB beta-hairpin between the DNA strands. Then UvrB probes one DNA strand for the presence of a lesion. If a lesion is found the UvrA subunits dissociate and the UvrB-DNA preincision complex is formed. This complex is subsequently bound by UvrC and the second UvrB is released. If no lesion is found, the DNA wraps around the other UvrB subunit that will check the other stand for damage. The protein is UvrABC system protein B of Xanthomonas oryzae pv. oryzae (strain PXO99A).